A 616-amino-acid chain; its full sequence is Glutamine--fructose-6-phosphate aminotransferase [isomerizing] (616 aa).

C2 (nucleophile; for GATase activity) is an active-site residue. In terms of domain architecture, Glutamine amidotransferase type-2 spans C2–D222. A disordered region spans residues T70–H89. SIS domains are found at residues I289–F428 and L461–P606. Residue K611 is the For Fru-6P isomerization activity of the active site.

As to quaternary structure, homodimer.

The protein resides in the cytoplasm. It carries out the reaction D-fructose 6-phosphate + L-glutamine = D-glucosamine 6-phosphate + L-glutamate. Catalyzes the first step in hexosamine metabolism, converting fructose-6P into glucosamine-6P using glutamine as a nitrogen source. The protein is Glutamine--fructose-6-phosphate aminotransferase [isomerizing] of Tropheryma whipplei (strain TW08/27) (Whipple's bacillus).